Reading from the N-terminus, the 192-residue chain is NADH-quinone oxidoreductase subunit C (192 aa).

Residues 170-192 are disordered; the sequence is LGGIPVEYKGATVPPPDERRQYA.

This sequence belongs to the complex I 30 kDa subunit family. In terms of assembly, NDH-1 is composed of 14 different subunits. Subunits NuoB, C, D, E, F, and G constitute the peripheral sector of the complex.

Its subcellular location is the cell membrane. It carries out the reaction a quinone + NADH + 5 H(+)(in) = a quinol + NAD(+) + 4 H(+)(out). NDH-1 shuttles electrons from NADH, via FMN and iron-sulfur (Fe-S) centers, to quinones in the respiratory chain. The immediate electron acceptor for the enzyme in this species is believed to be a menaquinone. Couples the redox reaction to proton translocation (for every two electrons transferred, four hydrogen ions are translocated across the cytoplasmic membrane), and thus conserves the redox energy in a proton gradient. This chain is NADH-quinone oxidoreductase subunit C, found in Acidothermus cellulolyticus (strain ATCC 43068 / DSM 8971 / 11B).